Consider the following 333-residue polypeptide: Global transcription regulator sge1 (333 aa).

Disordered stretches follow at residues 93–139 (PPGE…PSVP) and 241–307 (QHQS…PQYQ).

The protein belongs to the MIT1/WOR1 family.

It localises to the nucleus. In terms of biological role, global transcriptional regulator that acts as an activator of secondary metabolism. Required for expression of a yet uncharacterized secondary metabolism gene cluster containing a non-canonical non-ribosomal peptide synthetase. Not required for conidiogenesis nor for pathogenicity, but is involved in vegetative growth. The chain is Global transcription regulator sge1 from Gibberella fujikuroi (strain CBS 195.34 / IMI 58289 / NRRL A-6831) (Bakanae and foot rot disease fungus).